Here is a 207-residue protein sequence, read N- to C-terminus: Small ribosomal subunit protein uS4 (207 aa).

A disordered region spans residues 31–55; sequence KCKLDSKPGQHGRTSGARTSDYGTQ. Over residues 42–53 the composition is skewed to polar residues; that stretch reads GRTSGARTSDYG. The 64-residue stretch at 97-160 folds into the S4 RNA-binding domain; that stretch reads SRLDNVVYRM…KKQARILEAL (64 aa).

Belongs to the universal ribosomal protein uS4 family. Part of the 30S ribosomal subunit. Contacts protein S5. The interaction surface between S4 and S5 is involved in control of translational fidelity.

Functionally, one of the primary rRNA binding proteins, it binds directly to 16S rRNA where it nucleates assembly of the body of the 30S subunit. Its function is as follows. With S5 and S12 plays an important role in translational accuracy. The sequence is that of Small ribosomal subunit protein uS4 from Paraburkholderia phymatum (strain DSM 17167 / CIP 108236 / LMG 21445 / STM815) (Burkholderia phymatum).